A 319-amino-acid chain; its full sequence is MASPTVKLNSGYDMPLVGFGLWKVNNDTCADQIYHAIKEGYRLFDGACDYGNEVEAGQGIARAIKDGLVKREELFIVSKLWNSFHDGDRVEPICRKQLADWGIDYFDLYIVHFPISLKYVDPAVRYPPGWKSEKDELEFGNATIQETWTAMESLVDKKLARSIGISNFSAQLVMDLLRYARIRPATLQIEHHPYLTQTRLVEYAQKEGLTVTAYSSFGPLSFLELSVQNAVDSPPLFEHQLVKSIAEKHGRTPAQVLLRWATQRGIAVIPKSNNPQRLKQNLDVTGWNLEEEEIKAISGLDRGLRFNDPLGYGLYAPIF.

Asn26 is a glycosylation site (N-linked (GlcNAc...) asparagine). The active-site Proton donor is Tyr50. His112 is a binding site for substrate. Asn141 and Asn167 each carry an N-linked (GlcNAc...) asparagine glycan. NAD(+) is bound by residues 166–167 (SN), 215–224 (SSFGPLSFLE), and 271–281 (KSNNPQRLKQN).

This sequence belongs to the aldo/keto reductase family.

It catalyses the reaction xylitol + NAD(+) = D-xylose + NADH + H(+). The catalysed reaction is xylitol + NADP(+) = D-xylose + NADPH + H(+). Its pathway is carbohydrate metabolism; D-xylose degradation. In terms of biological role, catalyzes the initial reaction in the xylose utilization pathway by reducing D-xylose into xylitol. Xylose is a major component of hemicelluloses such as xylan. Most fungi utilize D-xylose via three enzymatic reactions, xylose reductase (XR), xylitol dehydrogenase (XDH), and xylulokinase, to form xylulose 5-phosphate, which enters pentose phosphate pathway. In Aspergillus niger (strain ATCC MYA-4892 / CBS 513.88 / FGSC A1513), this protein is Probable NAD(P)H-dependent D-xylose reductase xyl1 (xyl1).